We begin with the raw amino-acid sequence, 454 residues long: tRNA modification GTPase MnmE (454 aa).

The (6S)-5-formyl-5,6,7,8-tetrahydrofolate site is built by arginine 23, glutamate 80, and lysine 120. The TrmE-type G domain occupies glycine 216–glycine 377. Asparagine 226 serves as a coordination point for K(+). GTP contacts are provided by residues asparagine 226–serine 231, threonine 245–threonine 251, aspartate 270–glycine 273, asparagine 335–aspartate 338, and serine 358–arginine 360. Serine 230 provides a ligand contact to Mg(2+). Threonine 245, isoleucine 247, and threonine 250 together coordinate K(+). Threonine 251 provides a ligand contact to Mg(2+). Residue lysine 454 participates in (6S)-5-formyl-5,6,7,8-tetrahydrofolate binding.

It belongs to the TRAFAC class TrmE-Era-EngA-EngB-Septin-like GTPase superfamily. TrmE GTPase family. As to quaternary structure, homodimer. Heterotetramer of two MnmE and two MnmG subunits. Requires K(+) as cofactor.

It localises to the cytoplasm. In terms of biological role, exhibits a very high intrinsic GTPase hydrolysis rate. Involved in the addition of a carboxymethylaminomethyl (cmnm) group at the wobble position (U34) of certain tRNAs, forming tRNA-cmnm(5)s(2)U34. The chain is tRNA modification GTPase MnmE from Citrobacter koseri (strain ATCC BAA-895 / CDC 4225-83 / SGSC4696).